The sequence spans 179 residues: Replication restart protein DnaT (179 aa).

The interval 156 to 179 (GGLPKRDVNTVSEPDSQIPPGFRG) is disordered.

It belongs to the DnaT family. As to quaternary structure, homooligomerizes. Interacts with PriB. Component of the replication restart primosome. Primosome assembly occurs via a 'hand-off' mechanism. PriA binds to replication forks, subsequently PriB then DnaT bind; DnaT then displaces ssDNA to generate the helicase loading substrate.

Its function is as follows. Involved in the restart of stalled replication forks, which reloads the replicative helicase on sites other than the origin of replication. Can function in multiple replication restart pathways. Displaces ssDNA from a PriB-ssDNA complex. Probably forms a spiral filament on ssDNA. The chain is Replication restart protein DnaT from Escherichia coli (strain ATCC 8739 / DSM 1576 / NBRC 3972 / NCIMB 8545 / WDCM 00012 / Crooks).